The following is a 310-amino-acid chain: Protoheme IX farnesyltransferase 2 (310 aa).

9 consecutive transmembrane segments (helical) span residues proline 25 to glycine 45, leucine 49 to isoleucine 69, histidine 98 to threonine 118, leucine 121 to methionine 141, serine 145 to cysteine 165, valine 176 to phenylalanine 196, isoleucine 222 to threonine 242, alanine 245 to tyrosine 265, and glutamine 277 to phenylalanine 297.

Belongs to the UbiA prenyltransferase family. Protoheme IX farnesyltransferase subfamily.

The protein localises to the cell inner membrane. It carries out the reaction heme b + (2E,6E)-farnesyl diphosphate + H2O = Fe(II)-heme o + diphosphate. The protein operates within porphyrin-containing compound metabolism; heme O biosynthesis; heme O from protoheme: step 1/1. Functionally, converts heme B (protoheme IX) to heme O by substitution of the vinyl group on carbon 2 of heme B porphyrin ring with a hydroxyethyl farnesyl side group. The sequence is that of Protoheme IX farnesyltransferase 2 from Shewanella sp. (strain ANA-3).